A 154-amino-acid chain; its full sequence is Large ribosomal subunit protein uL13 (154 aa).

It belongs to the universal ribosomal protein uL13 family. As to quaternary structure, part of the 50S ribosomal subunit.

In terms of biological role, this protein is one of the early assembly proteins of the 50S ribosomal subunit, although it is not seen to bind rRNA by itself. It is important during the early stages of 50S assembly. The protein is Large ribosomal subunit protein uL13 of Bartonella henselae (strain ATCC 49882 / DSM 28221 / CCUG 30454 / Houston 1) (Rochalimaea henselae).